Consider the following 121-residue polypeptide: Probable intron-encoded DNA endonuclease aI1 (121 aa).

Belongs to the LAGLIDADG endonuclease family.

It localises to the mitochondrion. In terms of biological role, mitochondrial DNA endonuclease involved in intron homing. In Mycosarcoma maydis (Corn smut fungus), this protein is Probable intron-encoded DNA endonuclease aI1 (aI1).